The following is a 272-amino-acid chain: Aquaporin-1 (272 aa).

Residues 1–11 (MASEFKKKLFW) lie on the Cytoplasmic side of the membrane. A helical transmembrane segment spans residues 12 to 29 (RAVVAEFLAMILFIFISI). Residues 30-48 (GSALGFHYPIKSNQTTGAV) lie on the Extracellular side of the membrane. An N-linked (GlcNAc...) asparagine glycan is attached at Asn-42. A helical membrane pass occupies residues 49–67 (QDNVKVSLAFGLSIATLAQ). The Cytoplasmic portion of the chain corresponds to 68-70 (SVG). Residues 71–84 (HISGAHLNPAVTLG) lie within the membrane without spanning it. The short motif at 78 to 80 (NPA) is the NPA 1 element. Residues 85-92 (LLLSCQIS) are Cytoplasmic-facing. A helical transmembrane segment spans residues 93–111 (ILRAIMYIIAQCVGAIVAT). Residues 112 to 135 (VILSGITSSLPDNSLGLNALAPGV) are Extracellular-facing. The chain crosses the membrane as a helical span at residues 136–155 (NSGQGLGIEIIGTLQLVLCV). At 156-166 (LATTDRRRRRD) the chain is on the cytoplasmic side. Residues 167-184 (LGDSGPLAIGFSVALGHL) traverse the membrane as a helical segment. The Extracellular portion of the chain corresponds to 185-189 (LAIDY). An intramembrane segment occupies 190-202 (TGCGINPARSFGS). Residues 195–197 (NPA) carry the NPA 2 motif. The Extracellular portion of the chain corresponds to 203 to 209 (SVITHNF). The helical transmembrane segment at 210 to 227 (QDHWIFWVGPFIGAALAV) threads the bilayer. At 228-272 (LIYDFILAPRSSDLTDRVKVWTSGQVEEYDLDADDINSRVEMKPK) the chain is on the cytoplasmic side. The residue at position 250 (Ser-250) is a Phosphoserine. Tyr-256 carries the post-translational modification Phosphotyrosine. Position 265 is a phosphoserine (Ser-265).

The protein belongs to the MIP/aquaporin (TC 1.A.8) family. Homotetramer; each monomer provides an independent water pore. Component of the ankyrin-1 complex in the erythrocyte, composed of ANK1, RHCE, RHAG, SLC4A1, EPB42, GYPA, GYPB and AQP1. Interacts with EPHB2; involved in endolymph production in the inner ear. Identified in a complex with STOM. Interacts (via the N-terminal) with ANK1 (via ANK 1-5 repeats). Interacts (via the C-terminal) with EPB42. As to expression, detected in fetal kidney (at protein level). Detected in fetal kidney.

The protein resides in the cell membrane. It carries out the reaction H2O(in) = H2O(out). The enzyme catalyses nitric oxide(out) = nitric oxide(in). The catalysed reaction is CO2(out) = CO2(in). It catalyses the reaction glycerol(in) = glycerol(out). It carries out the reaction H2O2(out) = H2O2(in). The enzyme catalyses K(+)(in) = K(+)(out). The catalysed reaction is Na(+)(in) = Na(+)(out). Functionally, forms a water channel that facilitates the transport of water across cell membranes, playing a crucial role in water homeostasis in various tissues. Could also be permeable to small solutes including hydrogen peroxide, glycerol and gases such as amonnia (NH3), nitric oxide (NO) and carbon dioxide (CO2). Recruited to the ankyrin-1 complex, a multiprotein complex of the erythrocyte membrane, it could be part of a CO2 metabolon, linking facilitated diffusion of CO2 across the membrane, anion exchange of Cl(-)/HCO3(-) and interconversion of dissolved CO2 and carbonic acid in the cytosol. In vitro, it shows non-selective gated cation channel activity and may be permeable to cations like K(+) and Na(+) in vivo. The chain is Aquaporin-1 from Ovis aries (Sheep).